Reading from the N-terminus, the 198-residue chain is Ribonuclease HII (198 aa).

In terms of domain architecture, RNase H type-2 spans 10 to 198; that stretch reads QLVAGVDEVG…PVKRALGLAS (189 aa). A divalent metal cation contacts are provided by D16, E17, and D108.

Belongs to the RNase HII family. Mn(2+) serves as cofactor. Mg(2+) is required as a cofactor.

Its subcellular location is the cytoplasm. The catalysed reaction is Endonucleolytic cleavage to 5'-phosphomonoester.. Functionally, endonuclease that specifically degrades the RNA of RNA-DNA hybrids. The polypeptide is Ribonuclease HII (Escherichia fergusonii (strain ATCC 35469 / DSM 13698 / CCUG 18766 / IAM 14443 / JCM 21226 / LMG 7866 / NBRC 102419 / NCTC 12128 / CDC 0568-73)).